We begin with the raw amino-acid sequence, 194 residues long: dTTP/UTP pyrophosphatase (194 aa).

Asp-76 (proton acceptor) is an active-site residue.

It belongs to the Maf family. YhdE subfamily. The cofactor is a divalent metal cation.

The protein resides in the cytoplasm. It catalyses the reaction dTTP + H2O = dTMP + diphosphate + H(+). The enzyme catalyses UTP + H2O = UMP + diphosphate + H(+). Its function is as follows. Nucleoside triphosphate pyrophosphatase that hydrolyzes dTTP and UTP. May have a dual role in cell division arrest and in preventing the incorporation of modified nucleotides into cellular nucleic acids. This chain is dTTP/UTP pyrophosphatase, found in Shewanella sp. (strain MR-7).